The chain runs to 503 residues: Beta-mannosyltransferase 4 (503 aa).

The Cytoplasmic segment spans residues 1 to 24 (MKLDTQQISHLLSRQMYHLAPRKK). Residues 25 to 45 (LLIWGGSLGFVLLLLIVASSH) traverse the membrane as a helical segment. The Extracellular segment spans residues 46-503 (QRIRSTILHR…QYCQRYGELH (458 aa)). Residue Asn468 is glycosylated (N-linked (GlcNAc...) asparagine).

The protein belongs to the BMT family.

The protein localises to the membrane. Functionally, beta-mannosyltransferase involved in cell wall biosynthesis. Responsible for addition of a hexose to the beta-mannose chain. The polypeptide is Beta-mannosyltransferase 4 (BMT4) (Komagataella phaffii (strain ATCC 76273 / CBS 7435 / CECT 11047 / NRRL Y-11430 / Wegner 21-1) (Yeast)).